The chain runs to 139 residues: uncharacterized protein (139 aa).

Residues 43–59 (FGVISTLIAIFIGAFWL) form a helical membrane-spanning segment.

It is found in the membrane. This is an uncharacterized protein from Haemophilus influenzae (strain ATCC 51907 / DSM 11121 / KW20 / Rd).